A 222-amino-acid chain; its full sequence is Vesicle transport v-SNARE 12 (222 aa).

Ser-2 bears the N-acetylserine mark. Residues 2–199 lie on the Cytoplasmic side of the membrane; that stretch reads SDVFEGYERQ…MSRRMTRNKW (198 aa). Residues 68-95 adopt a coiled-coil conformation; it reads KAVCLSKLREYKSDLNQLKKEFKRVSSA. Residues 200–220 traverse the membrane as a helical; Anchor for type IV membrane protein segment; the sequence is IITSVIVALVLAIILIISYKL. Over 221–222 the chain is Vesicular; the sequence is SH.

Belongs to the VTI1 family. In terms of assembly, forms SNARE complexes with the t-SNAREs SYP61 and either SYP41 or SYP42, and with a much lower affinity with SYP51 in the TGN. Also interacts with VPS45, a Sec1 protein, but not with SYP21 or SYP22. Binds to EPSIN2. Core constituent of the SNARE complex required for membrane fusion at the trans-Golgi network. Interacts with SCYL2B. Expressed in roots, stems, flowers and leaves.

The protein localises to the golgi apparatus. The protein resides in the trans-Golgi network membrane. Its subcellular location is the prevacuolar compartment membrane. It is found in the cell membrane. Its function is as follows. Together with either SYP41 or SYP61, required for membrane fusion; the fusion of phospholipid vesicles containing SYP41 or SYP61 and VTI12 is triggered by YKT61 and YKT62. Functions as a v-SNARE responsible for the docking or fusion of transport vesicles within the trans-Golgi network (TGN) and mediates liposome fusion. Necessary to deliver proteins to the protein storage vacuole (PSV). May be also involved in retrograde traffic to the cis-Golgi. This Arabidopsis thaliana (Mouse-ear cress) protein is Vesicle transport v-SNARE 12.